A 396-amino-acid polypeptide reads, in one-letter code: Phosphoglycerate kinase (396 aa).

Substrate-binding positions include 21–23 (DIN), Arg-36, 59–62 (HFGR), Arg-118, and Arg-151. ATP contacts are provided by residues Lys-201, Glu-323, and 353–356 (GGDT).

Belongs to the phosphoglycerate kinase family. Monomer.

Its subcellular location is the cytoplasm. It catalyses the reaction (2R)-3-phosphoglycerate + ATP = (2R)-3-phospho-glyceroyl phosphate + ADP. It participates in carbohydrate degradation; glycolysis; pyruvate from D-glyceraldehyde 3-phosphate: step 2/5. The protein is Phosphoglycerate kinase of Ruegeria sp. (strain TM1040) (Silicibacter sp.).